Here is a 385-residue protein sequence, read N- to C-terminus: uncharacterized protein (385 aa).

It belongs to the phage portal family. HK97 subfamily.

This is an uncharacterized protein from Rickettsia bellii (strain RML369-C).